The chain runs to 358 residues: Peptide chain release factor 1 (358 aa).

Q235 is modified (N5-methylglutamine).

It belongs to the prokaryotic/mitochondrial release factor family. Post-translationally, methylated by PrmC. Methylation increases the termination efficiency of RF1.

The protein localises to the cytoplasm. Its function is as follows. Peptide chain release factor 1 directs the termination of translation in response to the peptide chain termination codons UAG and UAA. This is Peptide chain release factor 1 from Neisseria meningitidis serogroup B (strain ATCC BAA-335 / MC58).